Consider the following 219-residue polypeptide: LHFPL tetraspan subfamily member 5 protein (219 aa).

At 1 to 24 the chain is on the cytoplasmic side; sequence MVKLLPAQEAAKIYHTNYVRNSRA. The chain crosses the membrane as a helical span at residues 25–45; sequence VGVMWGTLTICFSVLVMALFI. Topologically, residues 46 to 98 are extracellular; that stretch reads QPYWIGDSVSTPQAGYFGLFSYCVGNVLSSELICKGGPLDFSSIPSRAFKTAM. A helical transmembrane segment spans residues 99-119; the sequence is FFVALAMFLIIGSIICFSLFF. Topologically, residues 120–128 are cytoplasmic; that stretch reads VCNTATVYK. A helical transmembrane segment spans residues 129 to 149; sequence ICAWMQLAAATGLMIGCLVYP. The Extracellular segment spans residues 150–178; sequence DGWDSSEVRRMCGEQTGKYTLGHCTIRWA. Residues 179-199 form a helical membrane-spanning segment; the sequence is FMLAILSIGDALILSFLAFVL. Residues 200–219 lie on the Cytoplasmic side of the membrane; it reads GYRQDKLLPDDYKADGNEEV.

The protein belongs to the LHFP family. Forms the MET channel composed of TMC (TMC1 or TMC2), TMIE, TOMT, CIB (CIB2 or CIB3), LHPL5 and PCDH15. Interaction with PCDH15 is required for efficient localization to hair bundles.

The protein resides in the cell membrane. Functionally, auxiliary subunit of the mechanotransducer (MET) non-specific cation channel complex located at the tips of the shorter stereocilia of cochlear hair cells and that mediates sensory transduction in the auditory system. The MET complex is composed of two dimeric pore-forming ion-conducting transmembrane TMC (TMC1 or TMC2) subunits, and aided by several auxiliary proteins including LHFPL5, TMIE, CIB2/3 and TOMT, and the tip-link PCDH15. Functionally couples PCDH15 to the transduction channel. This chain is LHFPL tetraspan subfamily member 5 protein, found in Rattus norvegicus (Rat).